Reading from the N-terminus, the 442-residue chain is tRNA modification GTPase MnmE (442 aa).

Positions 22, 79, and 118 each coordinate (6S)-5-formyl-5,6,7,8-tetrahydrofolate. The region spanning 215–365 is the TrmE-type G domain; that stretch reads EIPIAIVGRP…LEKAILFEYQ (151 aa). N225 is a K(+) binding site. GTP is bound by residues 225 to 230, 244 to 250, and 269 to 272; these read NVGKSS, TNIEGTT, and DTAG. Position 229 (S229) interacts with Mg(2+). T244, I246, and T249 together coordinate K(+). T250 is a Mg(2+) binding site. Residue K442 participates in (6S)-5-formyl-5,6,7,8-tetrahydrofolate binding.

This sequence belongs to the TRAFAC class TrmE-Era-EngA-EngB-Septin-like GTPase superfamily. TrmE GTPase family. Homodimer. Heterotetramer of two MnmE and two MnmG subunits. Requires K(+) as cofactor.

Its subcellular location is the cytoplasm. Its function is as follows. Exhibits a very high intrinsic GTPase hydrolysis rate. Involved in the addition of a carboxymethylaminomethyl (cmnm) group at the wobble position (U34) of certain tRNAs, forming tRNA-cmnm(5)s(2)U34. The protein is tRNA modification GTPase MnmE of Mycoplasmopsis pulmonis (strain UAB CTIP) (Mycoplasma pulmonis).